An 802-amino-acid polypeptide reads, in one-letter code: Copal-8-ol diphosphate hydratase, chloroplastic (802 aa).

The N-terminal 24 residues, 1 to 24 (MQVIITSSHRFFCHHLHQLKSPTS), are a transit peptide targeting the chloroplast. Residue K249 participates in substrate binding. Mg(2+) is bound by residues D382 and D384. Positions 382 to 385 (DVDD) match the DXDD motif motif. K468 provides a ligand contact to substrate.

Belongs to the terpene synthase family. It depends on Mg(2+) as a cofactor. As to expression, expressed specifically in the secretory cells of the glandular trichomes.

It is found in the plastid. The protein resides in the chloroplast. It carries out the reaction (2E,6E,10E)-geranylgeranyl diphosphate + H2O = 8-hydroxycopalyl diphosphate. Its pathway is secondary metabolite biosynthesis; terpenoid biosynthesis. In terms of biological role, class-II terpene synthase that synthesizes 8-hydroxy-copalyl diphosphate. Involved in the biosynthesis of cis-abienol, a labdane diterpene that can be used as synthesis precursor of ambergris substitution fragance products. In Nicotiana tabacum (Common tobacco), this protein is Copal-8-ol diphosphate hydratase, chloroplastic.